A 102-amino-acid chain; its full sequence is Small ribosomal subunit protein uS10 (102 aa).

The protein belongs to the universal ribosomal protein uS10 family. Part of the 30S ribosomal subunit.

In terms of biological role, involved in the binding of tRNA to the ribosomes. This is Small ribosomal subunit protein uS10 from Planobispora rosea.